Reading from the N-terminus, the 219-residue chain is ATP-dependent dethiobiotin synthetase BioD (219 aa).

ATP is bound at residue 12 to 17 (GVGKTI). Thr16 serves as a coordination point for Mg(2+). Residue Lys32 is part of the active site. Residues Asp43 and 96-99 (ETSG) contribute to the ATP site. Mg(2+) contacts are provided by Asp43 and Glu96.

This sequence belongs to the dethiobiotin synthetase family. As to quaternary structure, homodimer. Requires Mg(2+) as cofactor.

Its subcellular location is the cytoplasm. The catalysed reaction is (7R,8S)-7,8-diammoniononanoate + CO2 + ATP = (4R,5S)-dethiobiotin + ADP + phosphate + 3 H(+). Its pathway is cofactor biosynthesis; biotin biosynthesis; biotin from 7,8-diaminononanoate: step 1/2. In terms of biological role, catalyzes a mechanistically unusual reaction, the ATP-dependent insertion of CO2 between the N7 and N8 nitrogen atoms of 7,8-diaminopelargonic acid (DAPA, also called 7,8-diammoniononanoate) to form a ureido ring. This chain is ATP-dependent dethiobiotin synthetase BioD, found in Chlamydia pneumoniae (Chlamydophila pneumoniae).